Here is an 803-residue protein sequence, read N- to C-terminus: Ribonucleoside-diphosphate reductase large chain (803 aa).

The ATP-cone domain maps to 1-91 (MYVVNRKGEE…TSNLHKNTSS (91 aa)). Residues 5 to 6 (NR), 11 to 17 (EPVSFDQ), Thr52, and Asp56 contribute to the ATP site. GDP is bound at residue Ser215. Cys216 and Cys442 are disulfide-bonded. DTTP-binding positions include 224-226 (DSI), Lys241, Arg254, and 261-262 (RG). Position 425 (Asn425) interacts with GDP. Asn425 serves as the catalytic Proton acceptor. Cys427 acts as the Cysteine radical intermediate in catalysis. Residues Glu429 and 604 to 607 (TAST) contribute to the GDP site. Glu429 functions as the Proton acceptor in the catalytic mechanism.

It belongs to the ribonucleoside diphosphate reductase large chain family. As to quaternary structure, heterodimer of a large and a small subunit.

The catalysed reaction is a 2'-deoxyribonucleoside 5'-diphosphate + [thioredoxin]-disulfide + H2O = a ribonucleoside 5'-diphosphate + [thioredoxin]-dithiol. Under complex allosteric control mediated by deoxynucleoside triphosphates and ATP binding to separate specificity and activation sites on the large subunit. The type of nucleotide bound at the specificity site determines substrate preference. It seems probable that ATP makes the enzyme reduce CDP and UDP, dGTP favors ADP reduction and dTTP favors GDP reduction. Stimulated by ATP and inhibited by dATP binding to the activity site. Functionally, provides the precursors necessary for DNA synthesis. Catalyzes the biosynthesis of deoxyribonucleotides from the corresponding ribonucleotides. The protein is Ribonucleoside-diphosphate reductase large chain (RNR1) of Cryptosporidium parvum.